Consider the following 485-residue polypeptide: Pre-glycoprotein polyprotein GP complex (485 aa).

G2 is lipidated: N-myristoyl glycine; by host. At 2 to 17 (GQFISFMQEIPTFLQE) the chain is on the extracellular side. The helical transmembrane segment at 18-33 (ALNIALVAVSLIAIIK) threads the bilayer. The Cytoplasmic segment spans residues 34 to 58 (GVVNLYKSGLFQFFVFLALAGRSCT). C57 contributes to the Zn(2+) binding site. At 59-424 (EEAFKIGLHT…QGKTPLTLVD (366 aa)) the chain is on the extracellular side. 6 cysteine pairs are disulfide-bonded: C92/C226, C135/C164, C207/C213, C271/C284, C293/C302, and C356/C377. 2 N-linked (GlcNAc...) asparagine; by host glycosylation sites follow: N95 and N105. N-linked (GlcNAc...) asparagine; by host glycans are attached at residues N166 and N178. The segment at 250–286 (LKAFFSWSLTDSSGKDTPGGYCLEEWMLVAAKMKCFG) is fusion. The HR1 stretch occupies residues 287 to 355 (NTAVAKCNLN…KIRELMSVPY (69 aa)). N-linked (GlcNAc...) asparagine; by host glycans are attached at residues N357, N365, N382, and N387. An HR2 region spans residues 360 to 423 (KFWYVNHTLS…RQGKTPLTLV (64 aa)). The helical transmembrane segment at 425-445 (ICFWSTVFFTASLFLHLVGIP) threads the bilayer. Residues 446-485 (THRHIRGEACPLPHRLNSLGGCRCGKYPNLKKPTVWRRGH) lie on the Cytoplasmic side of the membrane. The Zn(2+) site is built by H447, H449, C455, H459, C467, C469, and H485.

Belongs to the arenaviridae GPC protein family. Interacts with glycoprotein G2. Part of the GP complex (GP-C) together with glycoprotein G1 and glycoprotein G2. The GP-complex interacts with protein Z, which interacts with ribonucleocapsid; these interactions may induce virion budding. As to quaternary structure, homotrimer; disulfide-linked. In pre-fusion state, G1 homotrimers bind G2 homotrimers via ionic interactions. Part of the GP complex (GP-C) together with glycoprotein G2 and the stable signal peptide. Interacts with host TFRC. The GP-complex interacts with protein Z, which interacts with ribonucleocapsid; these interactions may induce virion budding. In terms of assembly, homotrimer. Interacts with the stable signal peptide. In pre-fusion state, G2 homotrimers bind G1 homotrimers via ionic interactions. Part of the GP complex (GP-C) together with glycoprotein G1 and the stable signal peptide. Acidification in the endosome triggers rearrangements, which ultimately leads to a 6 helix bundle formed by the two heptad repeat domains (HR1 and HR2) in post-fusion state. The GP-complex interacts with protein Z, which interacts with ribonucleocapsid; these interactions may induce virion budding. Post-translationally, specific enzymatic cleavages in vivo yield mature proteins. GP-C polyprotein is cleaved in the endoplasmic reticulum by the host protease MBTPS1. Only cleaved glycoprotein is incorporated into virions. In terms of processing, the SSP remains stably associated with the GP complex following cleavage by signal peptidase and plays crucial roles in the trafficking of GP through the secretory pathway. Myristoylation is necessary for GP2-mediated fusion activity.

It localises to the virion membrane. The protein localises to the host endoplasmic reticulum membrane. The protein resides in the host Golgi apparatus membrane. Its subcellular location is the host cell membrane. Functionally, functions as a cleaved signal peptide that is retained as the third component of the GP complex (GP-C). Helps to stabilize the spike complex in its native conformation. The SSP is required for efficient glycoprotein expression, post-translational maturation cleavage of G1 and G2, glycoprotein transport to the cell surface plasma membrane, formation of infectious virus particles, and acid pH-dependent glycoprotein-mediated cell fusion. Forms the virion spikes together with glycoprotein G2. The glycoprotein spike trimers are connected to the underlying matrix. Mediates virus attachment to host TFRC. This attachment induces virion internalization predominantly through clathrin-mediated endocytosis. In terms of biological role, forms the virion spikes together with glycoprotein G1. The glycoprotein spike trimers are connected to the underlying matrix. Class I viral fusion protein that directs fusion of viral and host endosomal membranes, leading to delivery of the nucleocapsid into the cytoplasm. Membrane fusion is mediated by irreversible conformational changes induced by acidification. This chain is Pre-glycoprotein polyprotein GP complex, found in Junin mammarenavirus (JUNV).